A 445-amino-acid polypeptide reads, in one-letter code: Tubulin beta-1 chain (445 aa).

Residues 1 to 4 carry the MREI motif motif; that stretch reads MREI. The GTP site is built by Gln11, Glu69, Ser138, Gly142, Thr143, Gly144, Asn204, and Asn226. Position 69 (Glu69) interacts with Mg(2+). The interval 425 to 445 is disordered; sequence YQDATAEEEGEFEEEGEEELA. Residues 429 to 445 show a composition bias toward acidic residues; it reads TAEEEGEFEEEGEEELA. Glu438 is modified (5-glutamyl polyglutamate).

This sequence belongs to the tubulin family. In terms of assembly, dimer of alpha and beta chains. A typical microtubule is a hollow water-filled tube with an outer diameter of 25 nm and an inner diameter of 15 nM. Alpha-beta heterodimers associate head-to-tail to form protofilaments running lengthwise along the microtubule wall with the beta-tubulin subunit facing the microtubule plus end conferring a structural polarity. Microtubules usually have 13 protofilaments but different protofilament numbers can be found in some organisms and specialized cells. Mg(2+) is required as a cofactor. Some glutamate residues at the C-terminus are polyglycylated, resulting in polyglycine chains on the gamma-carboxyl group. Glycylation is mainly limited to tubulin incorporated into axonemes (cilia and flagella) whereas glutamylation is prevalent in neuronal cells, centrioles, axonemes, and the mitotic spindle. Both modifications can coexist on the same protein on adjacent residues, and lowering polyglycylation levels increases polyglutamylation, and reciprocally. The precise function of polyglycylation is still unclear. Post-translationally, some glutamate residues at the C-terminus are polyglutamylated, resulting in polyglutamate chains on the gamma-carboxyl group. Polyglutamylation plays a key role in microtubule severing by spastin (SPAST). SPAST preferentially recognizes and acts on microtubules decorated with short polyglutamate tails: severing activity by SPAST increases as the number of glutamates per tubulin rises from one to eight, but decreases beyond this glutamylation threshold.

Its subcellular location is the cytoplasm. The protein localises to the cytoskeleton. Its function is as follows. Tubulin is the major constituent of microtubules, a cylinder consisting of laterally associated linear protofilaments composed of alpha- and beta-tubulin heterodimers. Microtubules grow by the addition of GTP-tubulin dimers to the microtubule end, where a stabilizing cap forms. Below the cap, tubulin dimers are in GDP-bound state, owing to GTPase activity of alpha-tubulin. The polypeptide is Tubulin beta-1 chain (Gadus morhua (Atlantic cod)).